Reading from the N-terminus, the 60-residue chain is Large ribosomal subunit protein bL32 (60 aa).

Belongs to the bacterial ribosomal protein bL32 family.

The chain is Large ribosomal subunit protein bL32 from Fervidobacterium nodosum (strain ATCC 35602 / DSM 5306 / Rt17-B1).